The chain runs to 150 residues: 3-dehydroquinate dehydratase (150 aa).

The Proton acceptor role is filled by tyrosine 26. Substrate is bound by residues asparagine 77, histidine 83, and aspartate 90. The active-site Proton donor is histidine 103. Residues 104–105 (LS) and arginine 114 contribute to the substrate site.

This sequence belongs to the type-II 3-dehydroquinase family. Homododecamer.

It catalyses the reaction 3-dehydroquinate = 3-dehydroshikimate + H2O. It functions in the pathway metabolic intermediate biosynthesis; chorismate biosynthesis; chorismate from D-erythrose 4-phosphate and phosphoenolpyruvate: step 3/7. Catalyzes a trans-dehydration via an enolate intermediate. The polypeptide is 3-dehydroquinate dehydratase (Photorhabdus laumondii subsp. laumondii (strain DSM 15139 / CIP 105565 / TT01) (Photorhabdus luminescens subsp. laumondii)).